The chain runs to 503 residues: Medium/long-chain-fatty-acid--CoA ligase FadD17 (503 aa).

It belongs to the ATP-dependent AMP-binding enzyme family.

It catalyses the reaction a medium-chain fatty acid + ATP + CoA = a medium-chain fatty acyl-CoA + AMP + diphosphate. The enzyme catalyses a long-chain fatty acid + ATP + CoA = a long-chain fatty acyl-CoA + AMP + diphosphate. It functions in the pathway lipid metabolism; fatty acid biosynthesis. Catalyzes the activation of medium/long-chain fatty acids as acyl-coenzyme A (acyl-CoA), which are then transferred to the multifunctional polyketide synthase (PKS) type III for further chain extension. In Mycobacterium marinum (strain ATCC BAA-535 / M), this protein is Medium/long-chain-fatty-acid--CoA ligase FadD17 (fadD17).